The primary structure comprises 344 residues: Phenylalanine--tRNA ligase alpha subunit (344 aa).

Glutamate 256 is a binding site for Mg(2+).

Belongs to the class-II aminoacyl-tRNA synthetase family. Phe-tRNA synthetase alpha subunit type 1 subfamily. Tetramer of two alpha and two beta subunits. Mg(2+) is required as a cofactor.

The protein localises to the cytoplasm. It catalyses the reaction tRNA(Phe) + L-phenylalanine + ATP = L-phenylalanyl-tRNA(Phe) + AMP + diphosphate + H(+). This Bacillus subtilis (strain 168) protein is Phenylalanine--tRNA ligase alpha subunit (pheS).